The primary structure comprises 87 residues: Putative septation protein SpoVG (87 aa).

Belongs to the SpoVG family.

Its function is as follows. Could be involved in septation. This Agathobacter rectalis (strain ATCC 33656 / DSM 3377 / JCM 17463 / KCTC 5835 / VPI 0990) (Eubacterium rectale) protein is Putative septation protein SpoVG.